An 898-amino-acid polypeptide reads, in one-letter code: Fasciclin-2 (898 aa).

A signal peptide spans 1-22; sequence MRTVACAVLLACFMGCLAGAWA. The Extracellular segment spans residues 23–764; sequence QSAGLEILPN…EDGSEGQMSS (742 aa). 5 Ig-like C2-type domains span residues 31–124, 134–219, 226–316, 321–423, and 428–525; these read PNSE…KQLS, PITW…RPIR, PQMS…VEVT, PRIG…GHLM, and PSFA…IMLR. Asparagine 35, asparagine 51, asparagine 149, asparagine 192, asparagine 297, and asparagine 328 each carry an N-linked (GlcNAc...) asparagine glycan. Cysteines 48 and 113 form a disulfide. 2 disulfides stabilise this stretch: cysteine 156-cysteine 203 and cysteine 248-cysteine 300. The cysteines at positions 343 and 407 are disulfide-linked. Residues asparagine 447, asparagine 457, and asparagine 580 are each glycosylated (N-linked (GlcNAc...) asparagine). Cysteines 450 and 509 form a disulfide. 2 Fibronectin type-III domains span residues 532 to 626 and 644 to 745; these read AVLQ…TPRI and GTEN…VKDP. The helical transmembrane segment at 765–782 threads the bilayer; it reads AAIVVLVVAALLLALLVV. Residues 783-898 lie on the Cytoplasmic side of the membrane; the sequence is DLVCCLVWRG…TSFVGKDSAV (116 aa).

It localises to the membrane. Neuronal recognition molecule. Involved in a pathway recognition for axons during the development of nerve fascicles. The chain is Fasciclin-2 (FAS2) from Schistocerca americana (American grasshopper).